A 256-amino-acid polypeptide reads, in one-letter code: Small ribosomal subunit protein uS2 (256 aa).

The disordered stretch occupies residues 229–256 (PVDDNGDYGDFDEAIDEYADETDASESE). The span at 232–256 (DNGDYGDFDEAIDEYADETDASESE) shows a compositional bias: acidic residues.

This sequence belongs to the universal ribosomal protein uS2 family.

In Picosynechococcus sp. (strain ATCC 27264 / PCC 7002 / PR-6) (Agmenellum quadruplicatum), this protein is Small ribosomal subunit protein uS2.